The sequence spans 160 residues: Transcription elongation factor GreA (160 aa).

Belongs to the GreA/GreB family.

Functionally, necessary for efficient RNA polymerase transcription elongation past template-encoded arresting sites. The arresting sites in DNA have the property of trapping a certain fraction of elongating RNA polymerases that pass through, resulting in locked ternary complexes. Cleavage of the nascent transcript by cleavage factors such as GreA or GreB allows the resumption of elongation from the new 3'terminus. GreA releases sequences of 2 to 3 nucleotides. This chain is Transcription elongation factor GreA, found in Francisella tularensis subsp. tularensis (strain FSC 198).